The primary structure comprises 202 residues: CASP-like protein 2U7 (202 aa).

Residues 1–10 (MLELYEKRRA) lie on the Cytoplasmic side of the membrane. Residues 11–31 (LLLLRLAAMFLSLAALLITVL) form a helical membrane-spanning segment. Residues 32–64 (NREDGFFSINVFGSPQPILTKATADFTLVKGLK) lie on the Extracellular side of the membrane. A helical membrane pass occupies residues 65 to 85 (FFAGAMGIVAGYSFLQLAIAM). At 86–101 (ASMFSGAPSILGGKRM) the chain is on the cytoplasmic side. A helical transmembrane segment spans residues 102–122 (AWLCFVGDMTASHLCAAAAAV). At 123–148 (SAQLAYLGKRGAPMWSAVCTYFSHYC) the chain is on the extracellular side. A helical transmembrane segment spans residues 149 to 169 (LVFGLAVIFAFLATLAALLVA). Residues 170-202 (SISSYHLFRLHGILQQQQQQRRQLQQEHVQDKP) lie on the Cytoplasmic side of the membrane.

Belongs to the Casparian strip membrane proteins (CASP) family. Homodimer and heterodimers.

It localises to the cell membrane. The sequence is that of CASP-like protein 2U7 from Selaginella moellendorffii (Spikemoss).